Reading from the N-terminus, the 220-residue chain is 7-cyano-7-deazaguanine synthase (220 aa).

Residue 10-20 (FSGGQDSTTCL) coordinates ATP. Zn(2+)-binding residues include C186, C195, C198, and C201.

Belongs to the QueC family. As to quaternary structure, homodimer. Zn(2+) serves as cofactor.

The enzyme catalyses 7-carboxy-7-deazaguanine + NH4(+) + ATP = 7-cyano-7-deazaguanine + ADP + phosphate + H2O + H(+). It functions in the pathway purine metabolism; 7-cyano-7-deazaguanine biosynthesis. In terms of biological role, catalyzes the ATP-dependent conversion of 7-carboxy-7-deazaguanine (CDG) to 7-cyano-7-deazaguanine (preQ(0)). The chain is 7-cyano-7-deazaguanine synthase from Bacillus cereus (strain AH187).